We begin with the raw amino-acid sequence, 146 residues long: Large ribosomal subunit protein uL13 (146 aa).

The protein belongs to the universal ribosomal protein uL13 family. Part of the 50S ribosomal subunit.

This protein is one of the early assembly proteins of the 50S ribosomal subunit, although it is not seen to bind rRNA by itself. It is important during the early stages of 50S assembly. The chain is Large ribosomal subunit protein uL13 from Sulfurisphaera tokodaii (strain DSM 16993 / JCM 10545 / NBRC 100140 / 7) (Sulfolobus tokodaii).